The sequence spans 559 residues: Frizzled-1 (559 aa).

The N-terminal stretch at 1 to 35 is a signal peptide; the sequence is MKHSHLLQRCSAQLCTRGSSLILSLLLSVCLSVEG. The Extracellular portion of the chain corresponds to 36 to 239; it reads QYNGEKGISI…FAPEELNFAR (204 aa). Residues 46-165 form the FZ domain; that stretch reads PDHGYCQPIS…NGAGELCVGQ (120 aa). Intrachain disulfides connect C51-C112, C59-C105, C96-C133, C122-C162, and C126-C150. The N-linked (GlcNAc...) asparagine glycan is linked to N65. The N-linked (GlcNAc...) asparagine glycan is linked to N166. Residues 240-260 traverse the membrane as a helical segment; the sequence is IWIGIWSVLCCASTLFTVLTY. The Cytoplasmic segment spans residues 261–273; sequence LVDMKRFSYPERP. Residues 274 to 294 traverse the membrane as a helical segment; it reads IIFLSGCYTMVAIAYIAGFLL. Over 295–321 the chain is Extracellular; it reads EDKVVCNERFAEDGYKTVAQGTKKEGC. Residues 322–342 form a helical membrane-spanning segment; the sequence is TFLFMMLYFFSMASSIWWVIL. At 343 to 364 the chain is on the cytoplasmic side; it reads SLTWFLAAGMKWGHEAIEANSQ. Residues 365 to 385 form a helical membrane-spanning segment; sequence YFHLAAWAVPAIKTITILAVG. Topologically, residues 386–408 are extracellular; it reads QVDGDTLSGVCFVGINNVDALRG. Residues 409–429 form a helical membrane-spanning segment; sequence FVLAPLFVYLFIGTSFLLAGF. Topologically, residues 430–455 are cytoplasmic; sequence VSLFRIRTIMKHDGTKTEKLEKLMVR. Residues 456–476 form a helical membrane-spanning segment; sequence IGIFSVLYTVPATIVIACYFY. At 477–513 the chain is on the extracellular side; that stretch reads EQAFREQWEKSWISQSCKTYAIPCPSTGHPPMSPDFT. Residues 514 to 534 form a helical membrane-spanning segment; it reads VFMIKYLMTLIVGITSGFWIW. At 535 to 559 the chain is on the cytoplasmic side; that stretch reads SGKTLNSWRKFYTRLTNSKQGETTV. A Lys-Thr-X-X-X-Trp motif, mediates interaction with the PDZ domain of Dvl family members motif is present at residues 537-542; it reads KTLNSW. The short motif at 557-559 is the PDZ-binding element; the sequence is TTV.

The protein belongs to the G-protein coupled receptor Fz/Smo family. As to quaternary structure, interacts with wnt8. As to expression, in the embryo, expressed in the heart, pronephros and otic vesicles.

It localises to the cell membrane. In terms of biological role, receptor for Wnt proteins. Functions in the canonical Wnt/beta-catenin signaling pathway. The canonical Wnt/beta-catenin signaling pathway leads to the activation of disheveled proteins, inhibition of GSK-3 kinase, nuclear accumulation of beta-catenin and activation of Wnt target genes. A second signaling pathway involving PKC and calcium fluxes has been seen for some family members, but it is not yet clear if it represents a distinct pathway or if it can be integrated in the canonical pathway, as PKC seems to be required for Wnt-mediated inactivation of GSK-3 kinase. Both pathways seem to involve interactions with G-proteins. May be involved in transduction and intercellular transmission of polarity information during tissue morphogenesis and/or in differentiated tissues. The protein is Frizzled-1 (fzd1) of Xenopus laevis (African clawed frog).